We begin with the raw amino-acid sequence, 861 residues long: Envelope glycoprotein gp160 (861 aa).

An N-terminal signal peptide occupies residues 1 to 32 (MRVKEKYQHLWRWGWKWGTMLLGILMICSATE). The Extracellular portion of the chain corresponds to 33-689 (KLWVTVYYGV…ITNWLWYIKI (657 aa)). A disulfide bridge links C54 with C74. Residues N88, N136, N141, N146, N161, and N165 are each glycosylated (N-linked (GlcNAc...) asparagine; by host). 5 cysteine pairs are disulfide-bonded: C119-C210, C126-C201, C131-C162, C223-C252, and C233-C244. Positions 131–161 (CTDLGNATNTNSSNTNSSSGEMMMEKGEIKN) are V1. The V2 stretch occupies residues 162–201 (CSFNISTSIRGKVQKEYAFFYKLDIIPIDNDTTSYTLTSC). A Putative binding site to alpha-4/beta-7 integrin motif is present at residues 184 to 186 (LDI). N191, N202, N235, N239, N246, N267, N281, N294, N300, N306, N337, N344, and N361 each carry an N-linked (GlcNAc...) asparagine; by host glycan. The tract at residues 301–335 (CTRPNNNTRKSIRIQRGPGRAFVTIGKIGNMRQAH) is V3. Residues C301 and C336 are joined by a disulfide bond. The interval 369-379 (SSGGDPEIVTH) is CD4-binding loop. 2 disulfide bridges follow: C383–C450 and C390–C423. The interval 390–423 (CNSTQLFNSTWFNSTWSTEGSNNTEGSDTITLPC) is V4. N-linked (GlcNAc...) asparagine; by host glycans are attached at residues N391, N397, N402, N411, N453, and N468. 2 V5 regions span residues 466 to 476 (NNNGSEIFRPG) and 468 to 476 (NGSEIFRPG). Positions 517 to 537 (AVGIGALFLGFLGAAGSTMGA) are fusion peptide. The interval 579 to 597 (KQLQARILAVERYLKDQQL) is immunosuppression. Residues C603 and C609 are joined by a disulfide bond. Residues N616, N621, N630, N642, and N679 are each glycosylated (N-linked (GlcNAc...) asparagine; by host). Positions 638 to 672 (REINNYTSLIHSLIEESQNQQEKNEQELLELDKWA) form a coiled coil. Positions 667–688 (ELDKWASLWNWFNITNWLWYIK) are MPER; binding to GalCer. The chain crosses the membrane as a helical span at residues 690–710 (FIMIVGGLVGLRIVFAVLSIV). Residues 711–861 (NRVRQGYSPL…IRQGLERILL (151 aa)) are Cytoplasmic-facing. The YXXL motif; contains endocytosis signal signature appears at 717 to 720 (YSPL). Residues 723-747 (QTHLPTPRGPDRPEGIEEEGGERDR) are disordered. S-palmitoyl cysteine; by host attachment occurs at residues C769 and C842. A Di-leucine internalization motif motif is present at residues 860 to 861 (LL).

It belongs to the HIV-1 env protein family. As to quaternary structure, the mature envelope protein (Env) consists of a homotrimer of non-covalently associated gp120-gp41 heterodimers. The resulting complex protrudes from the virus surface as a spike. There seems to be as few as 10 spikes on the average virion. Interacts with host CD4, CCR5 and CXCR4. Gp120 also interacts with the C-type lectins CD209/DC-SIGN and CLEC4M/DC-SIGNR (collectively referred to as DC-SIGN(R)). Gp120 and gp41 interact with GalCer. Gp120 interacts with host ITGA4/ITGB7 complex; on CD4+ T-cells, this interaction results in rapid activation of integrin ITGAL/LFA-1, which facilitates efficient cell-to-cell spreading of HIV-1. Gp120 interacts with cell-associated heparan sulfate; this interaction increases virus infectivity on permissive cells and may be involved in infection of CD4- cells. In terms of assembly, the mature envelope protein (Env) consists of a homotrimer of non-covalently associated gp120-gp41 heterodimers. The resulting complex protrudes from the virus surface as a spike. There seems to be as few as 10 spikes on the average virion. Highly glycosylated by host. The high number of glycan on the protein is reffered to as 'glycan shield' because it contributes to hide protein sequence from adaptive immune system. Post-translationally, palmitoylation of the transmembrane protein and of Env polyprotein (prior to its proteolytic cleavage) is essential for their association with host cell membrane lipid rafts. Palmitoylation is therefore required for envelope trafficking to classical lipid rafts, but not for viral replication. In terms of processing, specific enzymatic cleavages in vivo yield mature proteins. Envelope glycoproteins are synthesized as an inactive precursor that is heavily N-glycosylated and processed likely by host cell furin in the Golgi to yield the mature SU and TM proteins. The cleavage site between SU and TM requires the minimal sequence [KR]-X-[KR]-R. About 2 of the 9 disulfide bonds of gp41 are reduced by P4HB/PDI, following binding to CD4 receptor.

Its subcellular location is the virion membrane. It localises to the host cell membrane. The protein localises to the host endosome membrane. In terms of biological role, oligomerizes in the host endoplasmic reticulum into predominantly trimers. In a second time, gp160 transits in the host Golgi, where glycosylation is completed. The precursor is then proteolytically cleaved in the trans-Golgi and thereby activated by cellular furin or furin-like proteases to produce gp120 and gp41. Functionally, attaches the virus to the host lymphoid cell by binding to the primary receptor CD4. This interaction induces a structural rearrangement creating a high affinity binding site for a chemokine coreceptor like CXCR4 and/or CCR5. Acts as a ligand for CD209/DC-SIGN and CLEC4M/DC-SIGNR, which are respectively found on dendritic cells (DCs), and on endothelial cells of liver sinusoids and lymph node sinuses. These interactions allow capture of viral particles at mucosal surfaces by these cells and subsequent transmission to permissive cells. HIV subverts the migration properties of dendritic cells to gain access to CD4+ T-cells in lymph nodes. Virus transmission to permissive T-cells occurs either in trans (without DCs infection, through viral capture and transmission), or in cis (following DCs productive infection, through the usual CD4-gp120 interaction), thereby inducing a robust infection. In trans infection, bound virions remain infectious over days and it is proposed that they are not degraded, but protected in non-lysosomal acidic organelles within the DCs close to the cell membrane thus contributing to the viral infectious potential during DCs' migration from the periphery to the lymphoid tissues. On arrival at lymphoid tissues, intact virions recycle back to DCs' cell surface allowing virus transmission to CD4+ T-cells. Its function is as follows. Acts as a class I viral fusion protein. Under the current model, the protein has at least 3 conformational states: pre-fusion native state, pre-hairpin intermediate state, and post-fusion hairpin state. During fusion of viral and target intracellular membranes, the coiled coil regions (heptad repeats) assume a trimer-of-hairpins structure, positioning the fusion peptide in close proximity to the C-terminal region of the ectodomain. The formation of this structure appears to drive apposition and subsequent fusion of viral and target cell membranes. Complete fusion occurs in host cell endosomes and is dynamin-dependent, however some lipid transfer might occur at the plasma membrane. The virus undergoes clathrin-dependent internalization long before endosomal fusion, thus minimizing the surface exposure of conserved viral epitopes during fusion and reducing the efficacy of inhibitors targeting these epitopes. Membranes fusion leads to delivery of the nucleocapsid into the cytoplasm. The polypeptide is Envelope glycoprotein gp160 (Homo sapiens (Human)).